We begin with the raw amino-acid sequence, 357 residues long: Protein-glutamate methylesterase/protein-glutamine glutaminase (357 aa).

Positions arginine 3–methionine 120 constitute a Response regulatory domain. Aspartate 54 is subject to 4-aspartylphosphate. Residues phenylalanine 161–glutamate 355 form the CheB-type methylesterase domain. Active-site residues include serine 173, histidine 200, and aspartate 296.

Belongs to the CheB family. Post-translationally, phosphorylated by CheA. Phosphorylation of the N-terminal regulatory domain activates the methylesterase activity.

The protein resides in the cytoplasm. It carries out the reaction [protein]-L-glutamate 5-O-methyl ester + H2O = L-glutamyl-[protein] + methanol + H(+). The catalysed reaction is L-glutaminyl-[protein] + H2O = L-glutamyl-[protein] + NH4(+). In terms of biological role, involved in chemotaxis. Part of a chemotaxis signal transduction system that modulates chemotaxis in response to various stimuli. Catalyzes the demethylation of specific methylglutamate residues introduced into the chemoreceptors (methyl-accepting chemotaxis proteins or MCP) by CheR. Also mediates the irreversible deamidation of specific glutamine residues to glutamic acid. The chain is Protein-glutamate methylesterase/protein-glutamine glutaminase from Bacillus licheniformis (strain ATCC 14580 / DSM 13 / JCM 2505 / CCUG 7422 / NBRC 12200 / NCIMB 9375 / NCTC 10341 / NRRL NRS-1264 / Gibson 46).